Reading from the N-terminus, the 266-residue chain is Luciferase (266 aa).

Residues 22 to 41 (GLAVTCCAVAVASIIAFPYI) form a helical membrane-spanning segment.

It belongs to the fungal luciferase family.

The protein resides in the membrane. The catalysed reaction is 3-hydroxyhispidin + O2 = (E)-caffeoylpyruvate + hnu + CO2. It carries out the reaction 3-hydroxyhispidin + O2 = 4-[(E)-2-(3,4-dihydroxyphenyl)ethenyl]-1,7-dihydroxy-2,3,5-trioxabicyclo[2.2.2]oct-7-en-6-one. Functionally, luciferase; part of the gene cluster that mediates the fungal bioluminescence cycle. Uses the fungal luciferin 3-hydroxyhispidin as a substrate to produce an endoperoxide as a high-energy intermediate with decomposition that yields oxyluciferin (also known as caffeoylpyruvate) and light emission. The fungal bioluminescence cycle begins with the hispidin synthetase that catalyzes the formation of hispidin which is further hydroxylated by the hispidin-3-hydroxylase, yielding the fungal luciferin 3-hydroxyhispidin. The luciferase then produces an endoperoxide as a high-energy intermediate with decomposition that yields oxyluciferin and light emission. Oxyluciferin can be recycled to caffeic acid by caffeoylpyruvate hydrolase. This is Luciferase from Armillaria mellea (Honey mushroom).